Here is a 117-residue protein sequence, read N- to C-terminus: Large ribosomal subunit protein bL17 (117 aa).

This sequence belongs to the bacterial ribosomal protein bL17 family. Part of the 50S ribosomal subunit. Contacts protein L32.

This chain is Large ribosomal subunit protein bL17, found in Coprothermobacter proteolyticus (strain ATCC 35245 / DSM 5265 / OCM 4 / BT).